The primary structure comprises 585 residues: MNIFADFDARIKKTLQDIDLKQKDGGELDLSRIGVEPPRDASHGDIATNAAMLLSKAVGQNPRELAARIAEALKADEDVESVDVAGPGFINLRLKASYWQRELLVMLNEGTDFGRSRLGAGKKVNVEYVSANPTGPMHVGHCRGAVVGDVLANLLKFAGYDVVKEYYINDAGAQIDVLARSVMLRYREALGESIGEIPAGLYPGDYLVRVGQELAGEFGTKLLEMPEAEALAIVKDRTIDAMMAMIRADLDALNVHHDVFYSERKLHVDHARAIRNAINDLTLKGHVYKGKLPPPKGQLPEDWEDREQTLFRSTEVGDDIDRPLMKSDGSFTYFAGDVAYFKDKYDRGFNEMIYVLGADHGGYVKRLEAVARAVSDGKAKLTVLLCQLVKLFRNGEPVRMSKRAGEFITLRDVVDEVGRDPVRFMMLYRKNDAPLDFDFAKVTEQSKDNPVFYVQYASARCHSVFRQAADQLGLVDLDRVAMGSHFEKLTDESEIALVRKLAEYPRLIESAAIHQEPHRLAFYLYDLASSFHSQWNRGTENPDLRFIKVNDPDLSLARLGLVQVVSDVLTSGLTIIGADAPTEMH.

The 'HIGH' region motif lies at 131–141 (ANPTGPMHVGH).

This sequence belongs to the class-I aminoacyl-tRNA synthetase family. Monomer.

It is found in the cytoplasm. It catalyses the reaction tRNA(Arg) + L-arginine + ATP = L-arginyl-tRNA(Arg) + AMP + diphosphate. The polypeptide is Arginine--tRNA ligase (Brucella suis (strain ATCC 23445 / NCTC 10510)).